The primary structure comprises 483 residues: Bromoperoxidase-catalase (483 aa).

The tract at residues 1 to 24 is disordered; that stretch reads MTQGPLTTEAGAPVADNQNSETAG. Active-site residues include His54 and Asn127. Tyr337 serves as a coordination point for heme.

This sequence belongs to the catalase family.

The enzyme catalyses 2 H2O2 = O2 + 2 H2O. The polypeptide is Bromoperoxidase-catalase (bca) (Streptomyces venezuelae (strain ATCC 10712 / CBS 650.69 / DSM 40230 / JCM 4526 / NBRC 13096 / PD 04745)).